Reading from the N-terminus, the 79-residue chain is Putative defensin-like protein 29 (79 aa).

An N-terminal signal peptide occupies residues 1–26; the sequence is MASSGKCVFLVFLCMVALLAPSEVHA. 3 cysteine pairs are disulfide-bonded: cysteine 45–cysteine 65, cysteine 51–cysteine 74, and cysteine 55–cysteine 76.

This sequence belongs to the DEFL family.

The protein localises to the secreted. This is Putative defensin-like protein 29 from Arabidopsis thaliana (Mouse-ear cress).